A 408-amino-acid polypeptide reads, in one-letter code: UPF0496 protein At5g66670 (408 aa).

A run of 2 helical transmembrane segments spans residues 239–259 (VVFA…AAMM) and 262–282 (PVLS…GMWC).

It belongs to the UPF0496 family.

It localises to the membrane. This Arabidopsis thaliana (Mouse-ear cress) protein is UPF0496 protein At5g66670.